The primary structure comprises 922 residues: Isoleucine--tRNA ligase (922 aa).

Residues 57-67 (PYANGDIHLGH) carry the 'HIGH' region motif. An L-isoleucyl-5'-AMP-binding site is contributed by Glu553. The 'KMSKS' region motif lies at 594 to 598 (KMSKS). Lys597 contributes to the ATP binding site. Cys892, Cys895, Cys912, and Cys915 together coordinate Zn(2+).

The protein belongs to the class-I aminoacyl-tRNA synthetase family. IleS type 1 subfamily. As to quaternary structure, monomer. Requires Zn(2+) as cofactor.

The protein resides in the cytoplasm. It carries out the reaction tRNA(Ile) + L-isoleucine + ATP = L-isoleucyl-tRNA(Ile) + AMP + diphosphate. Its function is as follows. Catalyzes the attachment of isoleucine to tRNA(Ile). As IleRS can inadvertently accommodate and process structurally similar amino acids such as valine, to avoid such errors it has two additional distinct tRNA(Ile)-dependent editing activities. One activity is designated as 'pretransfer' editing and involves the hydrolysis of activated Val-AMP. The other activity is designated 'posttransfer' editing and involves deacylation of mischarged Val-tRNA(Ile). This is Isoleucine--tRNA ligase from Desulfitobacterium hafniense (strain Y51).